Here is a 252-residue protein sequence, read N- to C-terminus: Ditrans,polycis-undecaprenyl-diphosphate synthase ((2E,6E)-farnesyl-diphosphate specific) (252 aa).

D25 is an active-site residue. Mg(2+) is bound at residue D25. Substrate contacts are provided by residues 26–29, W30, R38, H42, and 70–72; these read GNGR and SSE. N73 acts as the Proton acceptor in catalysis. Substrate contacts are provided by W74, R76, and R193. H198 lines the Mg(2+) pocket. Substrate is bound at residue 199–201; sequence RIS. A Mg(2+)-binding site is contributed by E212.

This sequence belongs to the UPP synthase family. As to quaternary structure, homodimer. Mg(2+) serves as cofactor.

The enzyme catalyses 8 isopentenyl diphosphate + (2E,6E)-farnesyl diphosphate = di-trans,octa-cis-undecaprenyl diphosphate + 8 diphosphate. Catalyzes the sequential condensation of isopentenyl diphosphate (IPP) with (2E,6E)-farnesyl diphosphate (E,E-FPP) to yield (2Z,6Z,10Z,14Z,18Z,22Z,26Z,30Z,34E,38E)-undecaprenyl diphosphate (di-trans,octa-cis-UPP). UPP is the precursor of glycosyl carrier lipid in the biosynthesis of bacterial cell wall polysaccharide components such as peptidoglycan and lipopolysaccharide. This is Ditrans,polycis-undecaprenyl-diphosphate synthase ((2E,6E)-farnesyl-diphosphate specific) from Salmonella typhi.